The primary structure comprises 284 residues: Diaminopimelate epimerase (284 aa).

Residues Asn-21, Gln-54, and Asn-74 each coordinate substrate. The active-site Proton donor is the Cys-83. Residues 84–85 (GN), Asn-167, Asn-200, and 218–219 (ER) contribute to the substrate site. The Proton acceptor role is filled by Cys-227. A substrate-binding site is contributed by 228–229 (GS).

It belongs to the diaminopimelate epimerase family. In terms of assembly, homodimer.

Its subcellular location is the cytoplasm. The enzyme catalyses (2S,6S)-2,6-diaminopimelate = meso-2,6-diaminopimelate. It participates in amino-acid biosynthesis; L-lysine biosynthesis via DAP pathway; DL-2,6-diaminopimelate from LL-2,6-diaminopimelate: step 1/1. In terms of biological role, catalyzes the stereoinversion of LL-2,6-diaminopimelate (L,L-DAP) to meso-diaminopimelate (meso-DAP), a precursor of L-lysine and an essential component of the bacterial peptidoglycan. The protein is Diaminopimelate epimerase of Buchnera aphidicola subsp. Acyrthosiphon pisum (strain APS) (Acyrthosiphon pisum symbiotic bacterium).